The chain runs to 356 residues: UDP-N-acetylglucosamine--N-acetylmuramyl-(pentapeptide) pyrophosphoryl-undecaprenol N-acetylglucosamine transferase (356 aa).

UDP-N-acetyl-alpha-D-glucosamine contacts are provided by residues 12–14, Asn120, Arg163, Ser187, and Gln286; that span reads SGG.

Belongs to the glycosyltransferase 28 family. MurG subfamily.

It is found in the cell inner membrane. It carries out the reaction di-trans,octa-cis-undecaprenyl diphospho-N-acetyl-alpha-D-muramoyl-L-alanyl-D-glutamyl-meso-2,6-diaminopimeloyl-D-alanyl-D-alanine + UDP-N-acetyl-alpha-D-glucosamine = di-trans,octa-cis-undecaprenyl diphospho-[N-acetyl-alpha-D-glucosaminyl-(1-&gt;4)]-N-acetyl-alpha-D-muramoyl-L-alanyl-D-glutamyl-meso-2,6-diaminopimeloyl-D-alanyl-D-alanine + UDP + H(+). The protein operates within cell wall biogenesis; peptidoglycan biosynthesis. Its function is as follows. Cell wall formation. Catalyzes the transfer of a GlcNAc subunit on undecaprenyl-pyrophosphoryl-MurNAc-pentapeptide (lipid intermediate I) to form undecaprenyl-pyrophosphoryl-MurNAc-(pentapeptide)GlcNAc (lipid intermediate II). The protein is UDP-N-acetylglucosamine--N-acetylmuramyl-(pentapeptide) pyrophosphoryl-undecaprenol N-acetylglucosamine transferase of Pelagibacter ubique (strain HTCC1062).